We begin with the raw amino-acid sequence, 442 residues long: Plasmalemma vesicle-associated protein (442 aa).

The Cytoplasmic portion of the chain corresponds to 1–27 (MGLAMEHGGSYARAGGSSRGCWYYLRY). Residues 28 to 48 (FFLFVSLIQFLIILGLVLFMV) form a helical; Signal-anchor for type II membrane protein membrane-spanning segment. Residues 49 to 442 (YGNVHVSTES…AGIPVAPSSG (394 aa)) are Extracellular-facing. A coiled-coil region spans residues 57–77 (ESNLQATERRAEGLYSQLLGL). Asn83, Asn89, Asn113, and Asn151 each carry an N-linked (GlcNAc...) asparagine glycan. Coiled-coil stretches lie at residues 202 to 225 (KTRELQHQERQLAKEQLQKVQALC) and 280 to 387 (SSKV…SALD). Disordered regions lie at residues 301–328 (NSDLQRQKLEAQQGLRASQEAKQKVEKE) and 394–418 (SQPMMPVSRPMGPVPNPQPIDPASL). The segment covering 319 to 328 (QEAKQKVEKE) has biased composition (basic and acidic residues).

In terms of assembly, homodimer. As to expression, expressed in lung, kidney, heart, aorta, placenta, muscle, pituitary gland, adrenals, mammary gland, bladder, lymph node, bone marrow, trachea, digestive tract, liver and tumor-associated endothelium.

It is found in the cell membrane. It localises to the membrane. The protein localises to the caveola. The protein resides in the cytoplasm. Its subcellular location is the perinuclear region. In terms of biological role, endothelial cell-specific membrane protein involved in the formation of the diaphragms that bridge endothelial fenestrae. It is also required for the formation of stomata of caveolae and transendothelial channels. Functions in microvascular permeability, endothelial fenestrae contributing to the passage of water and solutes and regulating transcellular versus paracellular flow in different organs. Plays a specific role in embryonic development. This chain is Plasmalemma vesicle-associated protein (PLVAP), found in Homo sapiens (Human).